The chain runs to 182 residues: Putative manganese efflux pump MntP (182 aa).

The next 6 helical transmembrane spans lie at Leu6 to Gly26, Ile37 to Val57, His71 to Leu91, Ile101 to Leu121, Ile131 to Ile151, and Tyr162 to Ile182.

Belongs to the MntP (TC 9.B.29) family.

The protein localises to the cell membrane. Functionally, probably functions as a manganese efflux pump. The chain is Putative manganese efflux pump MntP from Bacillus cereus (strain G9842).